The primary structure comprises 333 residues: uncharacterized protein (333 aa).

Residues 1 to 23 (MSRSFMIILTIMLIALSLGEVLA) form the signal peptide. The helical transmembrane segment at 232 to 252 (SFFLGVLVTLMILSPVIVYLW) threads the bilayer.

It is found in the membrane. This is an uncharacterized protein from Pyrococcus abyssi (strain GE5 / Orsay).